We begin with the raw amino-acid sequence, 230 residues long: Carbohydrate deacetylase (230 aa).

2 residues coordinate Mg(2+): H59 and H123.

This sequence belongs to the YdjC deacetylase family. In terms of assembly, homodimer. The cofactor is Mg(2+).

Its function is as follows. Probably catalyzes the deacetylation of acetylated carbohydrates an important step in the degradation of oligosaccharides. The sequence is that of Carbohydrate deacetylase from Oceanobacillus iheyensis (strain DSM 14371 / CIP 107618 / JCM 11309 / KCTC 3954 / HTE831).